The sequence spans 507 residues: Fumarate hydratase, mitochondrial (507 aa).

The transit peptide at 1–41 (MNRAFCLLARSRRFPRVPSAGAVLSGEAATLPRCAPNVVRM) directs the protein to the mitochondrion. N6-acetyllysine; alternate is present on residues K58, K63, and K77. 3 positions are modified to N6-succinyllysine; alternate: K58, K63, and K77. T82 is subject to Phosphothreonine. Position 91 is an N6-acetyllysine (K91). 2 positions are modified to N6-acetyllysine; alternate: K112 and K119. 2 positions are modified to N6-succinyllysine; alternate: K112 and K119. Substrate-binding positions include 142-144 (SGT), 173-176 (HPND), and 183-185 (SSN). Residue K210 is modified to N6-acetyllysine. K220 is modified (N6-acetyllysine; alternate). K220 is modified (N6-succinyllysine; alternate). T231 contacts substrate. H232 (proton donor/acceptor) is an active-site residue. A Phosphothreonine modification is found at T233. Position 289 is an N6-acetyllysine; alternate (K289). Residue K289 is modified to N6-succinyllysine; alternate. The active site involves S362. Residues S363 and 368–370 (KVN) contribute to the substrate site. S363 carries the phosphoserine modification. Residues K464 and K470 each carry the N6-succinyllysine modification. An N6-acetyllysine modification is found at K499.

This sequence belongs to the class-II fumarase/aspartase family. Fumarase subfamily. In terms of assembly, homotetramer. Interacts with H2AZ1. Post-translationally, phosphorylation at Thr-233 by PRKDC in response to DNA damage promotes translocation to the nucleus and recruitment to DNA double-strand breaks (DSBs).

It is found in the mitochondrion. The protein resides in the cytoplasm. Its subcellular location is the cytosol. It localises to the nucleus. The protein localises to the chromosome. It catalyses the reaction (S)-malate = fumarate + H2O. The protein operates within carbohydrate metabolism; tricarboxylic acid cycle; (S)-malate from fumarate: step 1/1. In terms of biological role, catalyzes the reversible stereospecific interconversion of fumarate to L-malate. Experiments in other species have demonstrated that specific isoforms of this protein act in defined pathways and favor one direction over the other. Functionally, catalyzes the hydration of fumarate to L-malate in the tricarboxylic acid (TCA) cycle to facilitate a transition step in the production of energy in the form of NADH. Its function is as follows. Catalyzes the dehydration of L-malate to fumarate. Fumarate metabolism in the cytosol plays a role during urea cycle and arginine metabolism; fumarate being a by-product of the urea cycle and amino-acid catabolism. Also plays a role in DNA repair by promoting non-homologous end-joining (NHEJ). In response to DNA damage and phosphorylation by PRKDC, translocates to the nucleus and accumulates at DNA double-strand breaks (DSBs): acts by catalyzing formation of fumarate, an inhibitor of KDM2B histone demethylase activity, resulting in enhanced dimethylation of histone H3 'Lys-36' (H3K36me2). In Rattus norvegicus (Rat), this protein is Fumarate hydratase, mitochondrial.